The sequence spans 479 residues: Glycogen synthase (479 aa).

Lysine 15 contributes to the ADP-alpha-D-glucose binding site.

Belongs to the glycosyltransferase 1 family. Bacterial/plant glycogen synthase subfamily.

It catalyses the reaction [(1-&gt;4)-alpha-D-glucosyl](n) + ADP-alpha-D-glucose = [(1-&gt;4)-alpha-D-glucosyl](n+1) + ADP + H(+). It participates in glycan biosynthesis; glycogen biosynthesis. Synthesizes alpha-1,4-glucan chains using ADP-glucose. The chain is Glycogen synthase from Roseobacter denitrificans (strain ATCC 33942 / OCh 114) (Erythrobacter sp. (strain OCh 114)).